The sequence spans 482 residues: uncharacterized protein (482 aa).

WD repeat units lie at residues 92-133 (DMPN…REPI) and 191-230 (GHEH…CLCK).

The protein localises to the cytoplasm. It localises to the nucleus. This is an uncharacterized protein from Schizosaccharomyces pombe (strain 972 / ATCC 24843) (Fission yeast).